The primary structure comprises 86 residues: Exodeoxyribonuclease 7 small subunit (86 aa).

Positions 64–86 are disordered; it reads SNPETVQDKTDTDEPDSNEFSLT.

This sequence belongs to the XseB family. In terms of assembly, heterooligomer composed of large and small subunits.

The protein localises to the cytoplasm. It catalyses the reaction Exonucleolytic cleavage in either 5'- to 3'- or 3'- to 5'-direction to yield nucleoside 5'-phosphates.. In terms of biological role, bidirectionally degrades single-stranded DNA into large acid-insoluble oligonucleotides, which are then degraded further into small acid-soluble oligonucleotides. This is Exodeoxyribonuclease 7 small subunit from Akkermansia muciniphila (strain ATCC BAA-835 / DSM 22959 / JCM 33894 / BCRC 81048 / CCUG 64013 / CIP 107961 / Muc).